A 705-amino-acid chain; its full sequence is Double-strand break repair protein MRE11 (705 aa).

The Mn(2+) site is built by aspartate 15, histidine 17, aspartate 55, and asparagine 122. The Proton donor role is filled by histidine 123. 3 residues coordinate Mn(2+): histidine 220, histidine 248, and histidine 250. Residues 505 to 514 are compositionally biased toward basic and acidic residues; sequence RSLRSKEDSR. The disordered stretch occupies residues 505-705; sequence RSLRSKEDSR…TRNYGAVRRR (201 aa). Composition is skewed to polar residues over residues 515 to 538 and 589 to 605; these read FTSSSQNLDTGGRSVTAQSNLNSF and SMKQTTLNFSQSRSSAA. The segment covering 641-663 has biased composition (basic residues); that stretch reads GRKRAAPRGGRGRGRGATAKRGR.

This sequence belongs to the MRE11/RAD32 family. In terms of assembly, component of the MRN complex composed of two heterodimers RAD50/MRE11 associated with a single NBS1. The cofactor is Mn(2+).

The protein localises to the nucleus. Its subcellular location is the chromosome. Its function is as follows. Core component of the MRN complex, which plays a central role in double-strand break (DSB) repair, DNA recombination, maintenance of telomere integrity and meiosis. The MRN complex is involved in the repair of DNA double-strand breaks (DSBs) via homologous recombination (HR), an error-free mechanism which primarily occurs during S and G2 phases. The complex (1) mediates the end resection of damaged DNA, which generates proper single-stranded DNA, a key initial steps in HR, and is (2) required for the recruitment of other repair factors and efficient activation of ATM and ATR upon DNA damage. Within the MRN complex, MRE11 possesses both single-strand endonuclease activity and double-strand-specific 3'-5' exonuclease activity. MRE11 first endonucleolytically cleaves the 5' strand at DNA DSB ends to prevent non-homologous end joining (NHEJ) and licence HR. It then generates a single-stranded DNA gap via 3' to 5' exonucleolytic degradation, which is required for single-strand invasion and recombination. The chain is Double-strand break repair protein MRE11 from Oryza sativa subsp. indica (Rice).